A 639-amino-acid chain; its full sequence is Protein P1 (639 aa).

Positions 1–20 (MNRFTAYAALFFMFSLCSTA) are cleaved as a signal peptide. 3 consecutive transmembrane segments (helical) span residues 121–141 (AASV…WTLA), 144–164 (ITLF…LGCI), and 172–192 (ALSL…KIIW). Residues 207 to 399 (VEGYKGFSVP…GITSPNYVFE (193 aa)) form the Peptidase S39 domain. Residues His-255, Asp-286, and Ser-354 each act as for protease activity in the active site. Disordered stretches follow at residues 455 to 515 (ATNA…PPMD) and 539 to 639 (VSRV…NSKA). Polar residues predominate over residues 463–488 (TAQTNSAEKTAPSTSAEKTALTNKPL). Residues 548 to 561 (QKPKQKKRGRRGGK) show a composition bias toward basic residues. The segment covering 566-577 (SLPPTSTQSTSG) has biased composition (polar residues). Residues 587-602 (ASGSAGTSRATTTPAP) are compositionally biased toward low complexity.

The protein belongs to the peptidase S39B family. Specific enzymatic cleavages in vivo yield mature proteins. The protease probably cleaves itself and releases the VPg protein. The VPg protein is probably further cleaved in its C-terminus.

It localises to the membrane. In terms of biological role, precursor from which the VPg molecule is probably released at the onset of the RNA synthesis. Essential for virus replication. Participates, together with the proteins P0 and P7, in the inhibition of the induction of aphid-induced host phytohormones. This could play a role in the attraction to the infected plants by aphids. The sequence is that of Protein P1 from Solanum tuberosum (Potato).